We begin with the raw amino-acid sequence, 62 residues long: Large ribosomal subunit protein bL32 (62 aa).

Residues 1–19 (MAVPKRKTSKTRRDKRRAS) are compositionally biased toward basic residues. The tract at residues 1 to 20 (MAVPKRKTSKTRRDKRRASS) is disordered.

This sequence belongs to the bacterial ribosomal protein bL32 family.

This is Large ribosomal subunit protein bL32 from Finegoldia magna (strain ATCC 29328 / DSM 20472 / WAL 2508) (Peptostreptococcus magnus).